Consider the following 408-residue polypeptide: MTTVTRSSSANLGASQKLAVKKGDAMMSSKGISNRSNRSALGDIGNKVSNMTIDPTKKALGLPVIKKEIIQKSKFTRSKTTVSESDILLQEKESACCSRAYTIFKDAIEPIVSTVDLMDISEDKPDAFSKVLLTVEDIDANDKDNPQLVSDYVNDIYHYMRHLEETFAVKANFLEGQEVTGKMRSILIDWLCQVHHRFHLLQETLYLTVSIIDRFLQVHPISRNKLQLVGVTSMLLASKYEEMYAPEVADFVYITDNAYTKADIRTMEQTILKTLDFSFGKPLCLHFLRRNSKAGQVDATKHTLAKYLMELTIIEYDMVHCNPSIIAAAALCLSMKVLDDSQWSETLAHYSNYSEKEIYPVMQKLAQLVVKAETSKLTAVKIKYSSSRFMKISSIPELKSNAITDLVL.

The protein belongs to the cyclin family. Cyclin AB subfamily. As to quaternary structure, interacts with the CDC2 protein kinase to form a serine/threonine kinase holoenzyme complex also known as maturation promoting factor (MPF). The cyclin subunit imparts substrate specificity to the complex.

Essential for the control of the cell cycle at the G2/M (mitosis) transition. In Patella vulgata (Common limpet), this protein is G2/mitotic-specific cyclin-B.